The following is a 378-amino-acid chain: Cell surface mannoprotein MP65 (378 aa).

The first 32 residues, 1-32, serve as a signal peptide directing secretion; sequence MLFKSFVTFTVLANALAAPLAHQHHQHKEEKR. The disordered stretch occupies residues 67–124; the sequence is VSVSVNTEPPQNHPTTTQDVASASTYPSSTDGSAASSSAAASSSSQAGSEPSGGVGSG. Residues 72–93 show a composition bias toward polar residues; it reads NTEPPQNHPTTTQDVASASTYP. The span at 94–116 shows a compositional bias: low complexity; the sequence is SSTDGSAASSSAAASSSSQAGSE. Glu316 (nucleophile) is an active-site residue.

The protein belongs to the glycosyl hydrolase 17 family. As to quaternary structure, component of a multiprotein complex of 250 kDa composed of at least HYR1, MP65, and PRA1. Glycosylated protein with a polysaccharide moiety composed exclusively of mannose and glucose at a ratio of 12.7 to 1. Contributes highly to the carbohydrate component of the matrix. Treatment with tunicamycin impairs glycosylation.

It localises to the secreted. Its subcellular location is the cell wall. Surface mannoprotein required for hyphal morphogenesis, surface adherence, and pathogenicity. Contributes in a high proportion to the carbohydrate component of the matrix due to high levels of glycosylation and may play important roles during biofilm development and maintenance. Acts as a major antigen target of host cell-mediated immune response. Induces extensive T-cell proliferation of human peripheral blood mononuclear cells. Facilitates host dendritic cells maturation and promotes cytokine production through its glycosylated portion while its protein core is essentially involved in induction of T-cell response. The chain is Cell surface mannoprotein MP65 (MP65) from Candida albicans (strain SC5314 / ATCC MYA-2876) (Yeast).